We begin with the raw amino-acid sequence, 502 residues long: Lysine--tRNA ligase (502 aa).

Mg(2+) is bound by residues Glu413 and Glu420.

The protein belongs to the class-II aminoacyl-tRNA synthetase family. As to quaternary structure, homodimer. Requires Mg(2+) as cofactor.

Its subcellular location is the cytoplasm. The enzyme catalyses tRNA(Lys) + L-lysine + ATP = L-lysyl-tRNA(Lys) + AMP + diphosphate. In Aromatoleum aromaticum (strain DSM 19018 / LMG 30748 / EbN1) (Azoarcus sp. (strain EbN1)), this protein is Lysine--tRNA ligase.